Consider the following 364-residue polypeptide: tRNA-specific 2-thiouridylase MnmA 1 (364 aa).

ATP contacts are provided by residues 11–18 and phenylalanine 37; that span reads GMSGGTDS. Catalysis depends on cysteine 96, which acts as the Nucleophile. The cysteines at positions 96 and 193 are disulfide-linked. Glycine 120 provides a ligand contact to ATP. Residues 142–144 are interaction with tRNA; the sequence is KDQ. Cysteine 193 acts as the Cysteine persulfide intermediate in catalysis. Positions 309–310 are interaction with tRNA; that stretch reads RY.

Belongs to the MnmA/TRMU family.

The protein localises to the cytoplasm. The catalysed reaction is S-sulfanyl-L-cysteinyl-[protein] + uridine(34) in tRNA + AH2 + ATP = 2-thiouridine(34) in tRNA + L-cysteinyl-[protein] + A + AMP + diphosphate + H(+). In terms of biological role, catalyzes the 2-thiolation of uridine at the wobble position (U34) of tRNA, leading to the formation of s(2)U34. The chain is tRNA-specific 2-thiouridylase MnmA 1 from Bacteroides fragilis (strain ATCC 25285 / DSM 2151 / CCUG 4856 / JCM 11019 / LMG 10263 / NCTC 9343 / Onslow / VPI 2553 / EN-2).